A 115-amino-acid polypeptide reads, in one-letter code: NADH-ubiquinone oxidoreductase chain 3 (115 aa).

The next 3 membrane-spanning stretches (helical) occupy residues F3–W23, F55–L75, and L84–Y104.

This sequence belongs to the complex I subunit 3 family. In terms of assembly, core subunit of respiratory chain NADH dehydrogenase (Complex I) which is composed of 45 different subunits. Interacts with TMEM186. Interacts with TMEM242.

The protein localises to the mitochondrion inner membrane. It carries out the reaction a ubiquinone + NADH + 5 H(+)(in) = a ubiquinol + NAD(+) + 4 H(+)(out). Core subunit of the mitochondrial membrane respiratory chain NADH dehydrogenase (Complex I) which catalyzes electron transfer from NADH through the respiratory chain, using ubiquinone as an electron acceptor. Essential for the catalytic activity of complex I. The chain is NADH-ubiquinone oxidoreductase chain 3 from Homo sapiens (Human).